A 360-amino-acid chain; its full sequence is MKPSIVAKLEALHERHEEVQALLGDAQTIADQERFRALSREYAQLSDVSRCFTDWQQVQEDIETAQMMLDDPEMREMAQDELREAKEKSEQLEQQLQVLLLPKDPDDERNAFLEVRAGTGGDEAALFAGDLFRMYSRYAEARRWRVEIMSASEGEHGGYKEIIAKISGDGVYGRLKFESGGHRVQRVPATESQGRIHTSACTVAVMPELPDAELPDINPADLRIDTFRSSGAGGQHVNTTDSAIRITHLPTGIVVECQDERSQHKNKAKALSVLGARIHAAEMAKRQQAEASTRRNLLGSGDRSDRNRTYNFPQGRVTDHRINLTLYCLDEVMEGKLDMLIEPIIQEHQADQLAALSEQE.

At Gln235 the chain carries N5-methylglutamine. The tract at residues 284–312 is disordered; that stretch reads AKRQQAEASTRRNLLGSGDRSDRNRTYNF.

The protein belongs to the prokaryotic/mitochondrial release factor family. Methylated by PrmC. Methylation increases the termination efficiency of RF1.

Its subcellular location is the cytoplasm. Its function is as follows. Peptide chain release factor 1 directs the termination of translation in response to the peptide chain termination codons UAG and UAA. This Escherichia coli O81 (strain ED1a) protein is Peptide chain release factor 1.